Reading from the N-terminus, the 190-residue chain is Dynein axonemal light chain 1 (190 aa).

LRR repeat units follow at residues 49-70 (VCEK…NGLK), 71-92 (NLKI…EAVG), 94-115 (SLEE…HVLK), and 116-137 (KLKV…NKLQ). The region spanning 150–190 (NPLEEKHSAEGDWQDRVTKSLKALKKLDGTPIIKNDEEEED) is the LRRCT domain.

Belongs to the dynein light chain LC1-type family. In terms of assembly, interacts with DNAH5, a outer arm dynein heavy chain. Interacts with tubulin located within the A-tubule of the outer doublets in a ATP-independent manner.

It is found in the cytoplasm. Its subcellular location is the cytoskeleton. The protein resides in the cilium axoneme. Part of the multisubunit axonemal ATPase complexes that generate the force for cilia motility and govern beat frequency. Component of the outer arm dynein (ODA). May be involved in a mechanosensory feedback mechanism controlling ODA activity based on external conformational cues by tethering the outer arm dynein heavy chain (DNAH5) to the microtubule within the axoneme. This is Dynein axonemal light chain 1 (DNAL1) from Ciona intestinalis (Transparent sea squirt).